We begin with the raw amino-acid sequence, 408 residues long: Peptidoglycan muramidase Tse3 (408 aa).

Ca(2+) contacts are provided by Asn181, Asp253, Gln254, Glu258, Glu375, Ser378, Arg379, Asp382, and Asn384.

Forms a heterotetramer with Tsi3 consisting of two Tse3 dimers and two Tsi3 dimers. Formation of the complex inactivates Tse3 enzymatic activity. The cofactor is Ca(2+).

The protein localises to the host membrane. It localises to the secreted. The catalysed reaction is Hydrolysis of (1-&gt;4)-beta-linkages between N-acetylmuramic acid and N-acetyl-D-glucosamine residues in a peptidoglycan and between N-acetyl-D-glucosamine residues in chitodextrins.. Enzymatic activity depends on membrane binding. Its function is as follows. Toxin secreted by the H1 type VI (H1-T6SS) secretion system into the periplasm of recipient cells. Degrades peptidoglycan via muramidase activity thereby helping itself to compete with other bacteria. To protect itself, the bacterium synthesizes immunity protein Tsi3 that specifically interacts with and inactivates cognate toxin. In Pseudomonas aeruginosa (strain ATCC 15692 / DSM 22644 / CIP 104116 / JCM 14847 / LMG 12228 / 1C / PRS 101 / PAO1), this protein is Peptidoglycan muramidase Tse3.